Consider the following 767-residue polypeptide: Actin filament-associated protein 1-like 1 (767 aa).

Basic and acidic residues predominate over residues 83-97; the sequence is LRDMSDDGERSKEAS. The disordered stretch occupies residues 83–145; sequence LRDMSDDGER…KSPEYISSHN (63 aa). Phosphoserine occurs at positions 87, 93, 97, 103, and 152. Positions 164–173 are enriched in polar residues; it reads SYPTTRMNGE. The tract at residues 164-210 is disordered; sequence SYPTTRMNGESKSSYNDSDAMSSSYESYDEEEEEEKGRQPKHQWPSE. Residues 174-189 are compositionally biased toward low complexity; that stretch reads SKSSYNDSDAMSSSYE. The PH 1 domain occupies 219–315; it reads DCRICAFLLR…WLKVIREVSR (97 aa). Residues Ser328 and Ser342 each carry the phosphoserine modification. Residues 341-381 form a disordered region; that stretch reads LSQEKQNSDSDSLGMNDSSSTLSRREACEHGKGKKNSLAEL. The segment covering 349–362 has biased composition (polar residues); it reads DSDSLGMNDSSSTL. Residues 417–511 form the PH 2 domain; the sequence is EAPCCGYLNV…WLGLLLVEMG (95 aa). Tyr556 carries the phosphotyrosine modification. Residues 563 to 605 form a disordered region; that stretch reads KVQDEEPQRPTGAQVKRHASSCSEKSHRADPQVKVKRHASSAN. Basic and acidic residues predominate over residues 586–595; sequence EKSHRADPQV. The stretch at 610–700 forms a coiled coil; it reads GKNRAEEDAR…AVKERLQQSL (91 aa). The interval 704–767 is disordered; sequence PALGLSVSSK…KAKEWEMKKT (64 aa). Over residues 709–733 the composition is skewed to polar residues; it reads SVSSKSKSQETTNKPQSSVPEQSLP. Ser746 bears the Phosphoserine mark. The span at 758 to 767 shows a compositional bias: basic and acidic residues; sequence KAKEWEMKKT.

As to quaternary structure, interacts with CTTN.

The protein localises to the cytoplasm. Its subcellular location is the cell projection. It is found in the podosome. The protein resides in the invadopodium. Its function is as follows. May be involved in podosome and invadosome formation. This is Actin filament-associated protein 1-like 1 (Afap1l1) from Rattus norvegicus (Rat).